Here is a 352-residue protein sequence, read N- to C-terminus: tRNA N6-adenosine threonylcarbamoyltransferase (352 aa).

Histidine 115 and histidine 119 together coordinate Fe cation. Residues 138–142 (LVSGG), aspartate 171, glycine 184, and asparagine 276 contribute to the substrate site. Aspartate 304 provides a ligand contact to Fe cation.

This sequence belongs to the KAE1 / TsaD family. The cofactor is Fe(2+).

Its subcellular location is the cytoplasm. The catalysed reaction is L-threonylcarbamoyladenylate + adenosine(37) in tRNA = N(6)-L-threonylcarbamoyladenosine(37) in tRNA + AMP + H(+). Functionally, required for the formation of a threonylcarbamoyl group on adenosine at position 37 (t(6)A37) in tRNAs that read codons beginning with adenine. Is involved in the transfer of the threonylcarbamoyl moiety of threonylcarbamoyl-AMP (TC-AMP) to the N6 group of A37, together with TsaE and TsaB. TsaD likely plays a direct catalytic role in this reaction. The protein is tRNA N6-adenosine threonylcarbamoyltransferase of Xanthomonas axonopodis pv. citri (strain 306).